The primary structure comprises 873 residues: Coatomer subunit gamma-2 (873 aa).

The span at 1 to 11 (MIKKFDKKDEE) shows a compositional bias: basic and acidic residues. A disordered region spans residues 1-21 (MIKKFDKKDEESGSGSNPFQN). HEAT repeat units lie at residues 64-101 (TEAT…ISED), 283-320 (RELA…KHPS), 321-355 (AVTA…GSES), 356-392 (SVDR…KYPR), 394-430 (HSAM…ENPE), and 467-504 (PQPS…QNDD).

Belongs to the COPG family. In terms of assembly, oligomeric complex.

It localises to the cytoplasm. The protein localises to the golgi apparatus membrane. It is found in the cytoplasmic vesicle. The protein resides in the COPI-coated vesicle membrane. Its function is as follows. The coatomer is a cytosolic protein complex that binds to dilysine motifs and reversibly associates with Golgi non-clathrin-coated vesicles, which further mediate biosynthetic protein transport from the ER, via the Golgi up to the trans Golgi network. Coatomer complex is required for budding from Golgi membranes, and is essential for the retrograde Golgi-to-ER transport of dilysine-tagged proteins. The sequence is that of Coatomer subunit gamma-2 (copg2) from Takifugu rubripes (Japanese pufferfish).